Here is a 384-residue protein sequence, read N- to C-terminus: Iron(3+)-hydroxamate import system permease protein FhuB (384 aa).

9 consecutive transmembrane segments (helical) span residues 58–78 (GAVIVLIAGLCLLCLGAFLSI), 115–135 (TAAAALVGALLAVSGAIMQGM), 154–174 (FAVSIAFAFFPGLSAMGLVLW), 176–196 (FAGAGLGASTVMGIGMFSRGG), 202–222 (LALAGTAVTYFFTGISTAIAI), 243–263 (WSGVQLLLIAGAVGLTLAFFI), 296–316 (VILTGAAVSIAGTIAFIGLII), 330–350 (WIIPCSAVLGAVLLVFADIAA), and 357–377 (FETPVGALTSLIGVPFFFYLA).

The protein belongs to the binding-protein-dependent transport system permease family. FecCD subfamily. As to quaternary structure, the complex is composed of an ATP-binding protein (FhuC), two transmembrane proteins (FhuB and FhuG) and a solute-binding protein (FhuD or YxeB).

The protein localises to the cell membrane. Its subcellular location is the membrane raft. Functionally, part of the ABC transporter complex FhuBGCD involved in iron(3+)-hydroxamate import. Responsible for the translocation of the substrate across the membrane. In Bacillus subtilis (strain 168), this protein is Iron(3+)-hydroxamate import system permease protein FhuB (fhuB).